The following is a 276-amino-acid chain: Diaminopimelate epimerase (276 aa).

Substrate is bound by residues Asn-13, Gln-46, and Asn-66. Catalysis depends on Cys-75, which acts as the Proton donor. Substrate-binding positions include 76–77 (GN), Asn-159, Asn-192, and 210–211 (ER). The Proton acceptor role is filled by Cys-219. 220-221 (GS) lines the substrate pocket.

Belongs to the diaminopimelate epimerase family. In terms of assembly, homodimer.

The protein resides in the cytoplasm. The enzyme catalyses (2S,6S)-2,6-diaminopimelate = meso-2,6-diaminopimelate. It functions in the pathway amino-acid biosynthesis; L-lysine biosynthesis via DAP pathway; DL-2,6-diaminopimelate from LL-2,6-diaminopimelate: step 1/1. Its function is as follows. Catalyzes the stereoinversion of LL-2,6-diaminopimelate (L,L-DAP) to meso-diaminopimelate (meso-DAP), a precursor of L-lysine and an essential component of the bacterial peptidoglycan. The sequence is that of Diaminopimelate epimerase from Vibrio vulnificus (strain CMCP6).